Here is a 445-residue protein sequence, read N- to C-terminus: Trigger factor (445 aa).

One can recognise a PPIase FKBP-type domain in the interval 162 to 247 (GDQVTIDAIG…IKAVHTAEPT (86 aa)).

It belongs to the FKBP-type PPIase family. Tig subfamily.

The protein resides in the cytoplasm. The enzyme catalyses [protein]-peptidylproline (omega=180) = [protein]-peptidylproline (omega=0). In terms of biological role, involved in protein export. Acts as a chaperone by maintaining the newly synthesized protein in an open conformation. Functions as a peptidyl-prolyl cis-trans isomerase. This is Trigger factor from Rickettsia conorii (strain ATCC VR-613 / Malish 7).